A 603-amino-acid polypeptide reads, in one-letter code: Geraniol synthase, chloroplastic (603 aa).

A chloroplast-targeting transit peptide spans 1-50 (MALQMIAPFLSSFLPNPRHSLAAHGLTHQKCVSKHISCSTTTPTYSTTVP). (2E)-geranyl diphosphate contacts are provided by Arg-301, Asp-338, Asp-342, Arg-479, and Asp-482. Residues Asp-338 and Asp-342 each contribute to the Mg(2+) site. The short motif at 338-342 (DDIYD) is the DDXXD motif element. Mg(2+) is bound by residues Asp-482, Thr-486, and Glu-490.

The protein belongs to the terpene synthase family. Tpsb subfamily. In terms of assembly, homodimer. Requires Mg(2+) as cofactor. It depends on Mn(2+) as a cofactor. Expressed in the oil cells of the leaves.

It localises to the plastid. Its subcellular location is the chloroplast. The catalysed reaction is (2E)-geranyl diphosphate + H2O = (2E)-geraniol + diphosphate. The protein operates within secondary metabolite biosynthesis; terpenoid biosynthesis. Monoterpene synthase that catalyzes the formation of geraniol from geranyl diphosphate. This Cinnamomum tenuipile (Alseodaphne mollis) protein is Geraniol synthase, chloroplastic (GerS).